We begin with the raw amino-acid sequence, 354 residues long: Uroporphyrinogen decarboxylase (354 aa).

Residues 27–31 (RQAGR), aspartate 77, tyrosine 154, threonine 209, and histidine 327 contribute to the substrate site.

This sequence belongs to the uroporphyrinogen decarboxylase family. In terms of assembly, homodimer.

The protein resides in the cytoplasm. The enzyme catalyses uroporphyrinogen III + 4 H(+) = coproporphyrinogen III + 4 CO2. It functions in the pathway porphyrin-containing compound metabolism; protoporphyrin-IX biosynthesis; coproporphyrinogen-III from 5-aminolevulinate: step 4/4. In terms of biological role, catalyzes the decarboxylation of four acetate groups of uroporphyrinogen-III to yield coproporphyrinogen-III. This chain is Uroporphyrinogen decarboxylase, found in Citrobacter koseri (strain ATCC BAA-895 / CDC 4225-83 / SGSC4696).